The following is a 194-amino-acid chain: ATP-dependent Clp protease proteolytic subunit (194 aa).

The active-site Nucleophile is Ser-97. His-122 is an active-site residue.

The protein belongs to the peptidase S14 family. Fourteen ClpP subunits assemble into 2 heptameric rings which stack back to back to give a disk-like structure with a central cavity, resembling the structure of eukaryotic proteasomes.

The protein resides in the cytoplasm. The catalysed reaction is Hydrolysis of proteins to small peptides in the presence of ATP and magnesium. alpha-casein is the usual test substrate. In the absence of ATP, only oligopeptides shorter than five residues are hydrolyzed (such as succinyl-Leu-Tyr-|-NHMec, and Leu-Tyr-Leu-|-Tyr-Trp, in which cleavage of the -Tyr-|-Leu- and -Tyr-|-Trp bonds also occurs).. Its function is as follows. Cleaves peptides in various proteins in a process that requires ATP hydrolysis. Has a chymotrypsin-like activity. Plays a major role in the degradation of misfolded proteins. The sequence is that of ATP-dependent Clp protease proteolytic subunit from Lactobacillus helveticus (strain DPC 4571).